The sequence spans 360 residues: Photosystem II protein D1 (360 aa).

The next 3 helical transmembrane spans lie at 29–46, 118–133, and 142–156; these read YIGW…TATS, HFLL…EWEL, and WIFV…AASA. His-118 contacts chlorophyll a. Tyr-126 contributes to the pheophytin a binding site. 2 residues coordinate [CaMn4O5] cluster: Asp-170 and Glu-189. A helical membrane pass occupies residues 197–218; that stretch reads FHMAGVAGVFGGSLFSAMHGSL. Residue His-198 coordinates chlorophyll a. Residues His-215 and 264-265 each bind a quinone; that span reads SF. His-215 provides a ligand contact to Fe cation. His-272 is a Fe cation binding site. The chain crosses the membrane as a helical span at residues 274 to 288; sequence FLAAWPVVGIWLTAM. The [CaMn4O5] cluster site is built by His-332, Glu-333, Asp-342, and Ala-344. The propeptide occupies 345-360; that stretch reads SGDVLPVALNAPAVNG.

The protein belongs to the reaction center PufL/M/PsbA/D family. In terms of assembly, PSII is composed of 1 copy each of membrane proteins PsbA, PsbB, PsbC, PsbD, PsbE, PsbF, PsbH, PsbI, PsbJ, PsbK, PsbL, PsbM, PsbT, PsbX, PsbY, PsbZ, Psb30/Ycf12, at least 3 peripheral proteins of the oxygen-evolving complex and a large number of cofactors. It forms dimeric complexes. Requires The D1/D2 heterodimer binds P680, chlorophylls that are the primary electron donor of PSII, and subsequent electron acceptors. It shares a non-heme iron and each subunit binds pheophytin, quinone, additional chlorophylls, carotenoids and lipids. D1 provides most of the ligands for the Mn4-Ca-O5 cluster of the oxygen-evolving complex (OEC). There is also a Cl(-1) ion associated with D1 and D2, which is required for oxygen evolution. The PSII complex binds additional chlorophylls, carotenoids and specific lipids. as cofactor. Post-translationally, tyr-161 forms a radical intermediate that is referred to as redox-active TyrZ, YZ or Y-Z. In terms of processing, C-terminally processed by CTPA; processing is essential to allow assembly of the oxygen-evolving complex and thus photosynthetic growth.

The protein resides in the plastid. It localises to the chloroplast thylakoid membrane. It carries out the reaction 2 a plastoquinone + 4 hnu + 2 H2O = 2 a plastoquinol + O2. Photosystem II (PSII) is a light-driven water:plastoquinone oxidoreductase that uses light energy to abstract electrons from H(2)O, generating O(2) and a proton gradient subsequently used for ATP formation. It consists of a core antenna complex that captures photons, and an electron transfer chain that converts photonic excitation into a charge separation. The D1/D2 (PsbA/PsbD) reaction center heterodimer binds P680, the primary electron donor of PSII as well as several subsequent electron acceptors. This Trieres chinensis (Marine centric diatom) protein is Photosystem II protein D1.